A 381-amino-acid polypeptide reads, in one-letter code: uncharacterized protein (381 aa).

The chain crosses the membrane as a helical span at residues 3–23; the sequence is GAVAGLVFLAVLVIFAIIVVA.

It belongs to the band 7/mec-2 family.

The protein localises to the membrane. This is an uncharacterized protein from Mycobacterium bovis (strain ATCC BAA-935 / AF2122/97).